Reading from the N-terminus, the 298-residue chain is Mimecan (298 aa).

The first 20 residues, 1-20, serve as a signal peptide directing secretion; sequence MKTLQSTLLLLLLVPLIKPA. O-linked (GalNAc...) threonine glycosylation occurs at T80. N-linked (GlcNAc...) (keratan sulfate) asparagine glycosylation occurs at N88. 7 LRR repeats span residues 112-131, 132-155, 156-179, 180-199, 200-225, 226-246, and 247-277; these read DAVPPLPKESAYLYARFNKI, KKLTAKDFADIPNLRRLDFTGNLI, EDIEDGTFSKLSLLEELSLAENQL, LKLPVLPPKLTLFNAKYNKI, KSRGIKANAFKKLNNLTFLYLDHNAL, ESVPLNLPESLRVIHLQFNNI, and ASITDDTFCKANDTSYIRDRIEEIRLEGNPI. N-linked (GlcNAc...) (keratan sulfate) asparagine glycosylation occurs at N214. C255 and C288 form a disulfide bridge. N258 carries N-linked (GlcNAc...) (keratan sulfate) asparagine glycosylation.

This sequence belongs to the small leucine-rich proteoglycan (SLRP) family. SLRP class III subfamily. In terms of processing, O-glycosylated with a core 1 or possibly core 8 glycan. Post-translationally, contains keratan sulfate. Bone.

Its subcellular location is the secreted. It localises to the extracellular space. The protein localises to the extracellular matrix. Functionally, induces bone formation in conjunction with TGF-beta-1 or TGF-beta-2. This is Mimecan (OGN) from Homo sapiens (Human).